Reading from the N-terminus, the 37-residue chain is Large ribosomal subunit protein bL36 (37 aa).

The protein belongs to the bacterial ribosomal protein bL36 family.

The polypeptide is Large ribosomal subunit protein bL36 (Natranaerobius thermophilus (strain ATCC BAA-1301 / DSM 18059 / JW/NM-WN-LF)).